Reading from the N-terminus, the 446-residue chain is Fatty acid desaturase 2 (446 aa).

Residues 1-132 (MGMGGQSGEG…EDMRLFKSNP (132 aa)) are Cytoplasmic-facing. The region spanning 20-97 (EAQYSWEEIQ…LKPLYIGELA (78 aa)) is the Cytochrome b5 heme-binding domain. Residues 133–153 (AFFIFYLFHILLIEFLAWCTL) traverse the membrane as a helical segment. H154 is a topological domain (lumenal). A helical membrane pass occupies residues 155 to 175 (YLGTGWIPAIITVLLLTISQA). Topologically, residues 176 to 265 (QAGWLQHDFG…IKYLPYNHQH (90 aa)) are cytoplasmic. A Histidine box-1 motif is present at residues 182 to 186 (HDFGH). The Histidine box-2 motif lies at 219–223 (HFQHH). A helical transmembrane segment spans residues 266–286 (LYFFLIGPPLLIPVYFTVQII). Topologically, residues 287–307 (KTMIARKDWVDLAWSVSYYVR) are lumenal. A helical membrane pass occupies residues 308 to 328 (FFFTFVPFFGVLGSLALLNAV). At 329 to 446 (RFFESHWFVW…QLWLDAYLHK (118 aa)) the chain is on the cytoplasmic side. The Histidine box-3 motif lies at 384–388 (QIEHH).

It belongs to the fatty acid desaturase type 1 family.

It localises to the endoplasmic reticulum membrane. It participates in lipid metabolism; polyunsaturated fatty acid biosynthesis. Component of a lipid metabolic pathway that catalyzes biosynthesis of highly unsaturated fatty acids (HUFA) from precursor essential polyunsaturated fatty acids (PUFA) linoleic acid (LA) (18:2n-6) and alpha-linolenic acid (ALA) (18:3n-3). Catalyzes the first and rate limiting step in this pathway which is the desaturation of LA (18:2n-6) and ALA (18:3n-3) into gamma-linoleic acid (GLA) (18:3n-6) and stearidonic acid (18:4n-3) respectively and other desaturation steps. Highly unsaturated fatty acids (HUFA) play pivotal roles in many biological functions. The protein is Fatty acid desaturase 2 (fads2) of Xenopus laevis (African clawed frog).